The sequence spans 211 residues: ATP phosphoribosyltransferase (211 aa).

It belongs to the ATP phosphoribosyltransferase family. Short subfamily. In terms of assembly, heteromultimer composed of HisG and HisZ subunits.

The protein localises to the cytoplasm. It catalyses the reaction 1-(5-phospho-beta-D-ribosyl)-ATP + diphosphate = 5-phospho-alpha-D-ribose 1-diphosphate + ATP. Its pathway is amino-acid biosynthesis; L-histidine biosynthesis; L-histidine from 5-phospho-alpha-D-ribose 1-diphosphate: step 1/9. In terms of biological role, catalyzes the condensation of ATP and 5-phosphoribose 1-diphosphate to form N'-(5'-phosphoribosyl)-ATP (PR-ATP). Has a crucial role in the pathway because the rate of histidine biosynthesis seems to be controlled primarily by regulation of HisG enzymatic activity. This chain is ATP phosphoribosyltransferase, found in Pseudomonas syringae pv. syringae (strain B728a).